We begin with the raw amino-acid sequence, 310 residues long: Protein FAM153A (310 aa).

Disordered stretches follow at residues Leu39–Pro58, Gln108–Glu136, Ser156–Glu184, and Thr250–Arg297. Residues Ser259–Glu268 are compositionally biased toward low complexity. Basic and acidic residues predominate over residues Ala270 to Thr282. Over residues Arg283–Arg297 the composition is skewed to basic residues.

This sequence belongs to the FAM153 family.

The sequence is that of Protein FAM153A (FAM153A) from Homo sapiens (Human).